Reading from the N-terminus, the 534-residue chain is Chaperonin GroEL 3 (534 aa).

ATP contacts are provided by residues 31–34 (TLGP), G416, 479–481 (NAL), and D495.

The protein belongs to the chaperonin (HSP60) family. In terms of assembly, forms a cylinder of 14 subunits composed of two heptameric rings stacked back-to-back. Interacts with the co-chaperonin GroES.

It is found in the cytoplasm. It catalyses the reaction ATP + H2O + a folded polypeptide = ADP + phosphate + an unfolded polypeptide.. In terms of biological role, together with its co-chaperonin GroES, plays an essential role in assisting protein folding. The GroEL-GroES system forms a nano-cage that allows encapsulation of the non-native substrate proteins and provides a physical environment optimized to promote and accelerate protein folding. In Protochlamydia amoebophila (strain UWE25), this protein is Chaperonin GroEL 3.